The following is a 149-amino-acid chain: Calmodulin-1 (149 aa).

4 EF-hand domains span residues 8-43 (EQIS…LGQN), 44-79 (PTEA…KMKD), 81-116 (DSEE…LGEK), and 117-149 (LTDE…MMAK). The Ca(2+) site is built by Asp21, Asp23, Asp25, Cys27, Glu32, Asp57, Asp59, Asn61, Thr63, Glu68, Asp94, Asp96, Asn98, Glu105, Asp130, Asp132, Asp134, Gln136, and Glu141.

Belongs to the calmodulin family. Interacts with ZAR1 (via CaMBD domain). Binds to IQD1. Binds to MEE62 in a calcium-dependent manner.

Its subcellular location is the cytoplasm. The protein resides in the cell membrane. In terms of biological role, calmodulin mediates the control of a large number of enzymes, ion channels and other proteins by Ca(2+). Among the enzymes to be stimulated by the calmodulin-Ca(2+) complex are a number of protein kinases and phosphatases. The polypeptide is Calmodulin-1 (CAM1) (Arabidopsis thaliana (Mouse-ear cress)).